Here is a 351-residue protein sequence, read N- to C-terminus: Fe-S cluster assembly protein DRE2 (351 aa).

The interval 1–151 is N-terminal SAM-like domain; that stretch reads MATTGRVLLL…KPDIGAQQAI (151 aa). A disordered region spans residues 93–118; sequence RNRENKPWGLSDGNGNNANSSRRYND. Residues 105–114 show a composition bias toward polar residues; the sequence is GNGNNANSSR. The linker stretch occupies residues 152–243; sequence PLKLGRRRKE…EDELLDEDDM (92 aa). [2Fe-2S] cluster contacts are provided by cysteine 253, cysteine 264, cysteine 267, and cysteine 269. The tract at residues 253 to 269 is fe-S binding site A; that stretch reads CRPKPGKRRRACKDCSC. Positions 314, 317, 325, and 328 each coordinate [4Fe-4S] cluster. 2 consecutive short sequence motifs (cx2C motif) follow at residues 314 to 317 and 325 to 328; these read CGNC and CDGC. Positions 314-328 are fe-S binding site B; sequence CGNCSLGDAFRCDGC.

The protein belongs to the anamorsin family. As to quaternary structure, monomer. Interacts with TAH18. Interacts with MIA40. The cofactor is [2Fe-2S] cluster. [4Fe-4S] cluster is required as a cofactor.

The protein localises to the cytoplasm. It localises to the mitochondrion intermembrane space. In terms of biological role, component of the cytosolic iron-sulfur (Fe-S) protein assembly (CIA) machinery required for the maturation of extramitochondrial Fe-S proteins. Part of an electron transfer chain functioning in an early step of cytosolic Fe-S biogenesis, facilitating the de novo assembly of a [4Fe-4S] cluster on the scaffold complex CFD1-NBP35. Electrons are transferred to DRE2 from NADPH via the FAD- and FMN-containing protein TAH18. TAH18-DRE2 are also required for the assembly of the diferric tyrosyl radical cofactor of ribonucleotide reductase (RNR), probably by providing electrons for reduction during radical cofactor maturation in the catalytic small subunit RNR2. This Ajellomyces capsulatus (strain H143) (Darling's disease fungus) protein is Fe-S cluster assembly protein DRE2.